Here is a 397-residue protein sequence, read N- to C-terminus: Acetate kinase (397 aa).

Position 8 (Asn-8) interacts with Mg(2+). Lys-15 provides a ligand contact to ATP. Arg-89 is a binding site for substrate. Asp-146 serves as the catalytic Proton donor/acceptor. ATP contacts are provided by residues 206–210 (HLGNG), 281–283 (DLR), and 329–333 (GIGEN). Residue Glu-382 participates in Mg(2+) binding.

It belongs to the acetokinase family. In terms of assembly, homodimer. Mg(2+) is required as a cofactor. The cofactor is Mn(2+).

The protein resides in the cytoplasm. The catalysed reaction is acetate + ATP = acetyl phosphate + ADP. Its pathway is metabolic intermediate biosynthesis; acetyl-CoA biosynthesis; acetyl-CoA from acetate: step 1/2. Its function is as follows. Catalyzes the formation of acetyl phosphate from acetate and ATP. Can also catalyze the reverse reaction. This Geobacillus sp. (strain WCH70) protein is Acetate kinase.